The sequence spans 285 residues: TATA box-binding protein-associated factor RNA polymerase I subunit D (285 aa).

Disordered regions lie at residues 1 to 49 (MAQS…RIPT) and 85 to 112 (KKKR…TRNI). Over residues 21 to 39 (GNQSDDSSNSSLFKTQCVP) the composition is skewed to polar residues. A Phosphoserine modification is found at S24. Residues 85 to 104 (KKKRKKRKKRKYKPKLRRQG) show a composition bias toward basic residues. S134 is modified (phosphoserine). The segment at 193–219 (HKYMDDDGPLSPIEEPSTEDEATDPQS) is disordered. The residue at position 229 (S229) is a Phosphoserine. Basic and acidic residues-rich tracts occupy residues 242–264 (NLEQ…KDAT) and 273–285 (KGGE…SEVS). Residues 242 to 285 (NLEQGKIKKESAFSKKSKAKDATQRGNRRSWKGGEHACLHSEVS) form a disordered region.

Component of the transcription factor SL1/TIF-IB complex, composed of TBP and at least TAF1A, TAF1B, TAF1C and TAF1D. Interacts with UBTF.

It is found in the nucleus. In terms of biological role, component of the transcription factor SL1/TIF-IB complex, which is involved in the assembly of the PIC (preinitiation complex) during RNA polymerase I-dependent transcription. The rate of PIC formation probably is primarily dependent on the rate of association of SL1/TIF-IB with the rDNA promoter. SL1/TIF-IB is involved in stabilization of nucleolar transcription factor 1/UBTF on rDNA. Formation of SL1/TIF-IB excludes the association of TBP with TFIID subunits. This chain is TATA box-binding protein-associated factor RNA polymerase I subunit D (Taf1d), found in Rattus norvegicus (Rat).